We begin with the raw amino-acid sequence, 255 residues long: MLLVIDIGNTNTVFGIFEDQKLVRDWRIRTKRNTTEDELNVLLTGLFTGSSVALADISRAVIASVVPPVERIYSAFCKKYLRCTPQWVSPANCAGITIRYANPQEVGADRIVNAVGAHAKYQTDLIVVDFGTATTFDLVSADGAYEGGVIAPGIGISADALFSHASKLPRVDLMTVPETVVGKDTAGSIKSGIIFGYAGLVDGIVSRMITERGRPHKVIATGGLAPLIAGVSATIEAVEPNLTLEGLRIIGSSAE.

Residue 6-13 (DIGNTNTV) participates in ATP binding. Substrate is bound by residues Y100 and 107–110 (GADR). Catalysis depends on D109, which acts as the Proton acceptor. D129 is a binding site for K(+). T132 serves as a coordination point for ATP. Substrate is bound at residue T185.

The protein belongs to the type III pantothenate kinase family. In terms of assembly, homodimer. NH4(+) serves as cofactor. The cofactor is K(+).

The protein resides in the cytoplasm. It catalyses the reaction (R)-pantothenate + ATP = (R)-4'-phosphopantothenate + ADP + H(+). It functions in the pathway cofactor biosynthesis; coenzyme A biosynthesis; CoA from (R)-pantothenate: step 1/5. Functionally, catalyzes the phosphorylation of pantothenate (Pan), the first step in CoA biosynthesis. This is Type III pantothenate kinase from Desulfosudis oleivorans (strain DSM 6200 / JCM 39069 / Hxd3) (Desulfococcus oleovorans).